The primary structure comprises 208 residues: Large ribosomal subunit protein uL4 (208 aa).

Residues 45-83 (RQGTHKSKTRAEVRGGGRKPYRQKGTGNARQGSTRSPLM) are disordered. Residues 69–80 (GTGNARQGSTRS) are compositionally biased toward polar residues.

The protein belongs to the universal ribosomal protein uL4 family. As to quaternary structure, part of the 50S ribosomal subunit.

In terms of biological role, one of the primary rRNA binding proteins, this protein initially binds near the 5'-end of the 23S rRNA. It is important during the early stages of 50S assembly. It makes multiple contacts with different domains of the 23S rRNA in the assembled 50S subunit and ribosome. Functionally, forms part of the polypeptide exit tunnel. The polypeptide is Large ribosomal subunit protein uL4 (Chlorobium luteolum (strain DSM 273 / BCRC 81028 / 2530) (Pelodictyon luteolum)).